The chain runs to 335 residues: Biotin synthase (335 aa).

The Radical SAM core domain maps to 43–269 (YFGKKVKLNM…INPTKEIRIA (227 aa)). Cys-61, Cys-65, and Cys-68 together coordinate [4Fe-4S] cluster. 4 residues coordinate [2Fe-2S] cluster: Cys-104, Cys-137, Cys-197, and Arg-267.

It belongs to the radical SAM superfamily. Biotin synthase family. In terms of assembly, homodimer. The cofactor is [4Fe-4S] cluster. It depends on [2Fe-2S] cluster as a cofactor.

The catalysed reaction is (4R,5S)-dethiobiotin + (sulfur carrier)-SH + 2 reduced [2Fe-2S]-[ferredoxin] + 2 S-adenosyl-L-methionine = (sulfur carrier)-H + biotin + 2 5'-deoxyadenosine + 2 L-methionine + 2 oxidized [2Fe-2S]-[ferredoxin]. Its pathway is cofactor biosynthesis; biotin biosynthesis; biotin from 7,8-diaminononanoate: step 2/2. Its function is as follows. Catalyzes the conversion of dethiobiotin (DTB) to biotin by the insertion of a sulfur atom into dethiobiotin via a radical-based mechanism. The chain is Biotin synthase from Staphylococcus aureus (strain MRSA252).